Reading from the N-terminus, the 326-residue chain is Vitamin B12 import system permease protein BtuC (326 aa).

The next 9 membrane-spanning stretches (helical) occupy residues 15 to 35 (WLLC…CAGE), 61 to 81 (LAVL…QALF), 88 to 108 (PGLL…VLLG), 112 to 132 (LPNW…TLIL), 146 to 166 (LLAG…AIYF), 184 to 204 (GGVD…LLWI), 240 to 260 (GWMV…GLVI), 274 to 294 (VLLP…DIVA), and 302 to 322 (ELPI…WLLL).

The protein belongs to the binding-protein-dependent transport system permease family. FecCD subfamily. As to quaternary structure, the complex is composed of two ATP-binding proteins (BtuD), two transmembrane proteins (BtuC) and a solute-binding protein (BtuF).

It localises to the cell inner membrane. Functionally, part of the ABC transporter complex BtuCDF involved in vitamin B12 import. Involved in the translocation of the substrate across the membrane. The protein is Vitamin B12 import system permease protein BtuC of Shigella sonnei (strain Ss046).